The following is a 150-amino-acid chain: SsrA-binding protein (150 aa).

The tract at residues 129–150 is disordered; the sequence is KRQTLKSKEADREMARALRDRH.

The protein belongs to the SmpB family.

Its subcellular location is the cytoplasm. In terms of biological role, required for rescue of stalled ribosomes mediated by trans-translation. Binds to transfer-messenger RNA (tmRNA), required for stable association of tmRNA with ribosomes. tmRNA and SmpB together mimic tRNA shape, replacing the anticodon stem-loop with SmpB. tmRNA is encoded by the ssrA gene; the 2 termini fold to resemble tRNA(Ala) and it encodes a 'tag peptide', a short internal open reading frame. During trans-translation Ala-aminoacylated tmRNA acts like a tRNA, entering the A-site of stalled ribosomes, displacing the stalled mRNA. The ribosome then switches to translate the ORF on the tmRNA; the nascent peptide is terminated with the 'tag peptide' encoded by the tmRNA and targeted for degradation. The ribosome is freed to recommence translation, which seems to be the essential function of trans-translation. The polypeptide is SsrA-binding protein (Syntrophotalea carbinolica (strain DSM 2380 / NBRC 103641 / GraBd1) (Pelobacter carbinolicus)).